We begin with the raw amino-acid sequence, 260 residues long: Ribosomal RNA small subunit methyltransferase J (260 aa).

Residues 125 to 126 (ER) and aspartate 179 contribute to the S-adenosyl-L-methionine site.

The protein belongs to the methyltransferase superfamily. RsmJ family.

It is found in the cytoplasm. It carries out the reaction guanosine(1516) in 16S rRNA + S-adenosyl-L-methionine = N(2)-methylguanosine(1516) in 16S rRNA + S-adenosyl-L-homocysteine + H(+). Specifically methylates the guanosine in position 1516 of 16S rRNA. This Pseudomonas entomophila (strain L48) protein is Ribosomal RNA small subunit methyltransferase J.